The following is a 340-amino-acid chain: Protein-lysine N-methyltransferase EEF2KMT (340 aa).

Met1 is subject to N-acetylmethionine. Residues Trp139, 165–167, Trp238, and Ala257 contribute to the S-adenosyl-L-methionine site; that span reads GSG.

Belongs to the class I-like SAM-binding methyltransferase superfamily. EEF2KMT family. As to quaternary structure, interacts with FAM86B2 and FAM86C1P.

It is found in the cytoplasm. It carries out the reaction L-lysyl-[protein] + 3 S-adenosyl-L-methionine = N(6),N(6),N(6)-trimethyl-L-lysyl-[protein] + 3 S-adenosyl-L-homocysteine + 3 H(+). Functionally, catalyzes the trimethylation of eukaryotic elongation factor 2 (EEF2) on 'Lys-525'. The chain is Protein-lysine N-methyltransferase EEF2KMT (EEF2KMT) from Bos taurus (Bovine).